A 291-amino-acid chain; its full sequence is Lipoyl synthase (291 aa).

Residues Cys43, Cys48, Cys54, Cys69, Cys73, Cys76, and Ser280 each coordinate [4Fe-4S] cluster. Residues 55–269 enclose the Radical SAM core domain; it reads FSSRTATFLI…AAYGRARGIP (215 aa).

It belongs to the radical SAM superfamily. Lipoyl synthase family. It depends on [4Fe-4S] cluster as a cofactor.

It localises to the cytoplasm. It catalyses the reaction [[Fe-S] cluster scaffold protein carrying a second [4Fe-4S](2+) cluster] + N(6)-octanoyl-L-lysyl-[protein] + 2 oxidized [2Fe-2S]-[ferredoxin] + 2 S-adenosyl-L-methionine + 4 H(+) = [[Fe-S] cluster scaffold protein] + N(6)-[(R)-dihydrolipoyl]-L-lysyl-[protein] + 4 Fe(3+) + 2 hydrogen sulfide + 2 5'-deoxyadenosine + 2 L-methionine + 2 reduced [2Fe-2S]-[ferredoxin]. It participates in protein modification; protein lipoylation via endogenous pathway; protein N(6)-(lipoyl)lysine from octanoyl-[acyl-carrier-protein]: step 2/2. Functionally, catalyzes the radical-mediated insertion of two sulfur atoms into the C-6 and C-8 positions of the octanoyl moiety bound to the lipoyl domains of lipoate-dependent enzymes, thereby converting the octanoylated domains into lipoylated derivatives. In Oleidesulfovibrio alaskensis (strain ATCC BAA-1058 / DSM 17464 / G20) (Desulfovibrio alaskensis), this protein is Lipoyl synthase.